Here is a 691-residue protein sequence, read N- to C-terminus: Solute carrier organic anion transporter family member 1B1 (691 aa).

Residues 1–28 (MDQNQHLNKTAEAQPSENKKTRYCNGLK) are Cytoplasmic-facing. The helical transmembrane segment at 29–48 (MFLAALSLSFIAKTLGAIIM) threads the bilayer. The Extracellular segment spans residues 49–67 (KSSIIHIERRFEISSSLVG). A helical transmembrane segment spans residues 68–88 (FIDGSFEIGNLLVIVFVSYFG). The Cytoplasmic segment spans residues 89 to 94 (SKLHRP). A helical transmembrane segment spans residues 95-119 (KLIGIGCFIMGIGGVLTALPHFFMG). The Extracellular segment spans residues 120 to 168 (YYRYSKETNINSSENSTSTLSTCLINQILSLNRASPEIVGKGCLKESGS). Asn-130 and Asn-134 each carry an N-linked (GlcNAc...) asparagine glycan. A helical membrane pass occupies residues 169–197 (YMWIYVFMGNMLRGIGETPIVPLGLSYID). Residues 198–216 (DFAKEGHSSLYLGILNAIA) are Cytoplasmic-facing. The chain crosses the membrane as a helical span at residues 217–237 (MIGPIIGFTLGSLFSKMYVDI). Residues 238 to 255 (GYVDLSTIRITPTDSRWV) lie on the Extracellular side of the membrane. Residues 256–280 (GAWWLNFLVSGLFSIISSIPFFFLP) traverse the membrane as a helical segment. The Cytoplasmic portion of the chain corresponds to 281-331 (QTPNKPQKERKASLSLHVLETNDEKDQTANLTNQGKNITKNVTGFFQSFKS). Residues Ser-293 and Ser-295 each carry the phosphoserine modification. Residues 332-353 (ILTNPLYVMFVLLTLLQVSSYI) traverse the membrane as a helical segment. Residues 354-373 (GAFTYVFKYVEQQYGQPSSK) lie on the Extracellular side of the membrane. A helical membrane pass occupies residues 374–397 (ANILLGVITIPIFASGMFLGGYII). At 398-401 (KKFK) the chain is on the cytoplasmic side. A helical membrane pass occupies residues 402–425 (LNTVGIAKFSCFTAVMSLSFYLLY). The Extracellular segment spans residues 426–537 (FFILCENKSV…DACTRKFYFF (112 aa)). Asn-432 carries N-linked (GlcNAc...) asparagine glycosylation. The Kazal-like domain maps to 453–508 (DVPLSYCNSDCNCDESQWEPVCGNNGITYISPCLAGCKSSSGNKKPIVFYNCSCLE). Disulfide bonds link Cys-459-Cys-489, Cys-465-Cys-485, and Cys-474-Cys-506. N-linked (GlcNAc...) asparagine glycosylation is found at Asn-503 and Asn-516. The helical transmembrane segment at 538 to 560 (VAIQVLNLFFSALGGTSHVMLIV) threads the bilayer. Residues 561 to 569 (KIVQPELKS) are Cytoplasmic-facing. The chain crosses the membrane as a helical span at residues 570–595 (LALGFHSMVIRALGGILAPIYFGALI). Topologically, residues 596–629 (DTTCIKWSTNNCGTRGSCRTYNSTSFSRVYLGLS) are extracellular. A glycan (N-linked (GlcNAc...) asparagine) is linked at Asn-617. A helical transmembrane segment spans residues 630-647 (SMLRVSSLVLYIILIYAM). Residues 648 to 691 (KKKYQEKDINASENGSVMDEANLESLNKNKHFVPSAGADSETHC) lie on the Cytoplasmic side of the membrane. Phosphoserine is present on residues Ser-672 and Ser-682.

It belongs to the organo anion transporter (TC 2.A.60) family. Highly expressed in liver, at the basolateral membranes of centrilobular hepatocytes. Expressed in liver (at protein level). Expressed in fetal liver. Not detected in heart, brain, placenta, lung, skeletal muscle, kidney, pancreas, spleen, thymus, prostate, testis, ovary, small intestine, colon and leukocyte. In testis, primarily localized to the basal membrane of Sertoli cells and weakly expressed in Leydig cells and within the tubules.

It is found in the basolateral cell membrane. The protein localises to the basal cell membrane. It catalyses the reaction taurocholate(out) = taurocholate(in). The catalysed reaction is dehydroepiandrosterone 3-sulfate(out) = dehydroepiandrosterone 3-sulfate(in). The enzyme catalyses estrone 3-sulfate(out) = estrone 3-sulfate(in). It carries out the reaction 3,3',5'-triiodo-L-thyronine(out) = 3,3',5'-triiodo-L-thyronine(in). It catalyses the reaction L-thyroxine(out) = L-thyroxine(in). The catalysed reaction is prostaglandin E2(out) = prostaglandin E2(in). The enzyme catalyses thromboxane B2(out) = thromboxane B2(in). It carries out the reaction 17beta-estradiol 17-O-(beta-D-glucuronate)(out) = 17beta-estradiol 17-O-(beta-D-glucuronate)(in). It catalyses the reaction leukotriene C4(out) = leukotriene C4(in). The catalysed reaction is leukotriene E4(out) = leukotriene E4(in). The enzyme catalyses (4E,15E)-bilirubin IXalpha C8-beta-D-glucuronoside(out) = (4E,15E)-bilirubin IXalpha C8-beta-D-glucuronoside(in). It carries out the reaction bilirubin IXalpha bis-beta-D-glucuronoside(out) = bilirubin IXalpha bis-beta-D-glucuronoside(in). Functionally, mediates the Na(+)-independent uptake of organic anions. Shows broad substrate specificity, can transport both organic anions such as bile acid taurocholate (cholyltaurine) and conjugated steroids (dehydroepiandrosterone 3-sulfate, 17-beta-glucuronosyl estradiol, and estrone 3-sulfate), as well as eicosanoids (prostaglandin E2, thromboxane B2, leukotriene C4, and leukotriene E4), and thyroid hormones (T4/L-thyroxine, and T3/3,3',5'-triiodo-L-thyronine). Can take up bilirubin glucuronides from plasma into the liver, contributing to the detoxification-enhancing liver-blood shuttling loop. Involved in the clearance of endogenous and exogenous substrates from the liver. Transports coproporphyrin I and III, by-products of heme synthesis, and may be involved in their hepatic disposition. May contribute to regulate the transport of organic compounds in testes across the blood-testis-barrier. Can transport HMG-CoA reductase inhibitors (also known as statins), such as pravastatin and pitavastatin, a clinically important class of hypolipidemic drugs. May play an important role in plasma and tissue distribution of the structurally diverse chemotherapeutic drug methotrexate. May also transport antihypertension agents, such as the angiotensin-converting enzyme (ACE) inhibitor prodrug enalapril, and the highly selective angiotensin II AT1-receptor antagonist valsartan, in the liver. Shows a pH-sensitive substrate specificity towards prostaglandin E2 and T4 which may be ascribed to the protonation state of the binding site and leads to a stimulation of substrate transport in an acidic microenvironment. Hydrogencarbonate/HCO3(-) acts as the probable counteranion that exchanges for organic anions. The protein is Solute carrier organic anion transporter family member 1B1 (SLCO1B1) of Homo sapiens (Human).